The sequence spans 374 residues: Cell wall integrity and stress response component 1 (374 aa).

A signal peptide spans 1 to 29 (MVFLNSSPFKGRLLFFVYLLIISTRLVAA). Topologically, residues 30–292 (DMNTQYGCYL…SNHTSLNAGA (263 aa)) are extracellular. Residues 31–119 (MNTQYGCYLV…DLYWSVYLTG (89 aa)) enclose the WSC domain. The interval 132–236 (VSSTTSSSSS…SSSSSSRPSS (105 aa)) is disordered. 2 N-linked (GlcNAc...) asparagine glycosylation sites follow: N278 and N284. A helical membrane pass occupies residues 293–313 (IVGIVIGCVAFAVVMALCIFL). Residues 314–374 (YFYFRRFKIR…RKILRVTNLN (61 aa)) lie on the Cytoplasmic side of the membrane. S354 is subject to Phosphoserine.

Post-translationally, O-mannosylated.

It is found in the membrane. In Schizosaccharomyces pombe (strain 972 / ATCC 24843) (Fission yeast), this protein is Cell wall integrity and stress response component 1 (wsc1).